Consider the following 89-residue polypeptide: Small ribosomal subunit protein bS20 (89 aa).

The tract at residues 1–28 (MTLANIKSAKKRAVQSEKRRQHNASQRS) is disordered.

This sequence belongs to the bacterial ribosomal protein bS20 family.

Functionally, binds directly to 16S ribosomal RNA. The polypeptide is Small ribosomal subunit protein bS20 (Haemophilus ducreyi (strain 35000HP / ATCC 700724)).